A 462-amino-acid polypeptide reads, in one-letter code: Centrosomal protein of 55 kDa (462 aa).

Basic and acidic residues predominate over residues 1-11 (MSSRSPKDLIK). The segment at 1-26 (MSSRSPKDLIKSKWGSRPSSSKSDTA) is disordered. Low complexity predominate over residues 12–23 (SKWGSRPSSSKS). Positions 50-400 (KMAEKGRSRL…TQLESLKQLH (351 aa)) form a coiled coil. Residues Ser-96 and Ser-99 each carry the phosphoserine modification. The interval 157–235 (ANCFNSSMNS…EGYLQVEKQK (79 aa)) is interaction with TSG101. Residues 160–214 (FNSSMNSIHEKEMQLKDALEKNQQWLVYDQQREAYVKGLLAKIFELEKRTETAAA) are interaction with PDCD6IP. The tract at residues 354 to 462 (QMQACTLDFE…LLVHVEYCMK (109 aa)) is required for localization to the interphase centrosome and to the midbody during cytokinesis. Positions 410–430 (PLQREPESRVKATSPKSPSAA) are disordered. Phosphoserine is present on residues Ser-423, Ser-426, and Ser-428. At Ser-434 the chain carries Phosphoserine; by PLK1.

In terms of assembly, homodimer. Interacts (phosphorylated on Ser-423 and Ser-426) with PLK1; the interaction is indirect via the MTMR3:MTMR4 heterooligomer, occurs during early mitosis, regulates the phosphorylation of CEP55 by PLK1 and its recruitment to the midbody where it can mediate cell abscission. Interacts with AKAP9/CG-NAP; the interaction occurs in interphase and is lost upon mitotic entry. Interacts with PCNT/Kendrin; the interaction occurs in interphase and is lost upon mitotic entry. Directly interacts with PDCD6IP; this interaction is required for PDCD6IP targeting to the midbody; CEP55 binds PDCD6IP in a 2:1 stoichiometry; PDCD6IP competes with TSG101 for the same binding site. Interacts with TSG101; TSG101 competes with PDCD6IP for the same binding site; interaction is required for cytokinesis. Interacts with MVB12A, VPS37B, VPS37C and VPS28. There is a hierachy of phosphorylation, where both Ser-423 and Ser-426 are phosphorylated at the onset of mitosis, prior to Ser-434. Phosphorylation at Ser-423 and Ser-426 is required for dissociation from the centrosome at the G2/M boundary. Phosphorylation at the 3 sites, Ser-423, Ser-426 and Ser-434, is required for protein function at the final stages of cell division to complete cytokinesis successfully.

It is found in the cytoplasm. The protein localises to the cytoskeleton. The protein resides in the microtubule organizing center. It localises to the centrosome. Its subcellular location is the centriole. It is found in the cleavage furrow. The protein localises to the midbody. The protein resides in the midbody ring. Its function is as follows. Plays a role in mitotic exit and cytokinesis. Recruits PDCD6IP and TSG101 to midbody during cytokinesis. Required for successful completion of cytokinesis. Not required for microtubule nucleation. Plays a role in the development of the brain and kidney. This Mus musculus (Mouse) protein is Centrosomal protein of 55 kDa.